The chain runs to 231 residues: Large ribosomal subunit protein uL5m (231 aa).

This sequence belongs to the universal ribosomal protein uL5 family.

It localises to the mitochondrion. This Prototheca wickerhamii protein is Large ribosomal subunit protein uL5m (RPL5).